A 170-amino-acid chain; its full sequence is Large ribosomal subunit protein uL15 (170 aa).

A compositionally biased stretch (basic and acidic residues) spans 1–12 (MKLHDLRPAEGA). The segment at 1 to 52 (MKLHDLRPAEGAHRKRKRIGRGHGSGKGKTGGKGMMGQKARSGPGPYRTFEG) is disordered. A compositionally biased stretch (basic residues) spans 13-26 (HRKRKRIGRGHGSG).

This sequence belongs to the universal ribosomal protein uL15 family. Part of the 50S ribosomal subunit.

Functionally, binds to the 23S rRNA. In Chloroflexus aurantiacus (strain ATCC 29366 / DSM 635 / J-10-fl), this protein is Large ribosomal subunit protein uL15.